A 269-amino-acid chain; its full sequence is GATA transcription factor 3 (269 aa).

A Nuclear localization signal motif is present at residues 136–143 (KPRTKRSR). The segment at 176–230 (LVFQRRCSHCGTNNTPQWRTGPVGPKTLCNACGVRFKSGRLCPEYRPADSPTFSN) adopts a GATA-type zinc-finger fold. A disordered region spans residues 245-269 (KSKELGEETGEASTKSDPVKFGSKW).

It belongs to the type IV zinc-finger family. Class A subfamily. As to expression, mostly expressed in roots. Also expressed in stems, flowers and leaves.

It is found in the nucleus. Functionally, transcriptional activator that specifically binds 5'-GATA-3' or 5'-GAT-3' motifs within gene promoters. May be involved in the regulation of some light-responsive genes. The chain is GATA transcription factor 3 (GATA3) from Arabidopsis thaliana (Mouse-ear cress).